The sequence spans 41 residues: Photosystem II reaction center protein L (41 aa).

A helical membrane pass occupies residues 20 to 40 (SLYLGLLLVFVVGILFSSYFF).

This sequence belongs to the PsbL family. In terms of assembly, PSII is composed of 1 copy each of membrane proteins PsbA, PsbB, PsbC, PsbD, PsbE, PsbF, PsbH, PsbI, PsbJ, PsbK, PsbL, PsbM, PsbT, PsbX, PsbY, PsbZ, Psb30/Ycf12, peripheral proteins PsbO, CyanoQ (PsbQ), PsbU, PsbV and a large number of cofactors. It forms dimeric complexes.

Its subcellular location is the cellular thylakoid membrane. One of the components of the core complex of photosystem II (PSII). PSII is a light-driven water:plastoquinone oxidoreductase that uses light energy to abstract electrons from H(2)O, generating O(2) and a proton gradient subsequently used for ATP formation. It consists of a core antenna complex that captures photons, and an electron transfer chain that converts photonic excitation into a charge separation. This subunit is found at the monomer-monomer interface and is required for correct PSII assembly and/or dimerization. In Trichodesmium erythraeum (strain IMS101), this protein is Photosystem II reaction center protein L.